Consider the following 368-residue polypeptide: S-adenosylmethionine decarboxylase proenzyme 1 (368 aa).

Residues Glu-9 and Arg-12 contribute to the active site. Ser-69 serves as the catalytic Schiff-base intermediate with substrate; via pyruvic acid. At Ser-69 the chain carries Pyruvic acid (Ser); by autocatalysis. Cys-83 (proton donor; for catalytic activity) is an active-site residue. Active-site proton acceptor; for processing activity residues include Ser-234 and His-247.

Belongs to the eukaryotic AdoMetDC family. It depends on pyruvate as a cofactor. In terms of processing, is synthesized initially as an inactive proenzyme. Formation of the active enzyme involves a self-maturation process in which the active site pyruvoyl group is generated from an internal serine residue via an autocatalytic post-translational modification. Two non-identical subunits are generated from the proenzyme in this reaction, and the pyruvate is formed at the N-terminus of the alpha chain, which is derived from the carboxyl end of the proenzyme. The post-translation cleavage follows an unusual pathway, termed non-hydrolytic serinolysis, in which the side chain hydroxyl group of the serine supplies its oxygen atom to form the C-terminus of the beta chain, while the remainder of the serine residue undergoes an oxidative deamination to produce ammonia and the pyruvoyl group blocking the N-terminus of the alpha chain.

It catalyses the reaction S-adenosyl-L-methionine + H(+) = S-adenosyl 3-(methylsulfanyl)propylamine + CO2. It functions in the pathway amine and polyamine biosynthesis; S-adenosylmethioninamine biosynthesis; S-adenosylmethioninamine from S-adenosyl-L-methionine: step 1/1. The chain is S-adenosylmethionine decarboxylase proenzyme 1 (SAMDC1) from Brassica juncea (Indian mustard).